The primary structure comprises 634 residues: Threonine--tRNA ligase (634 aa).

A TGS domain is found at 1–61 (MINIRFPDGS…NSNCELRLIT (61 aa)). A catalytic region spans residues 241 to 532 (DHRKIGKVLD…LIEHYAGNLP (292 aa)). The Zn(2+) site is built by Cys332, His383, and His509.

The protein belongs to the class-II aminoacyl-tRNA synthetase family. In terms of assembly, homodimer. The cofactor is Zn(2+).

It localises to the cytoplasm. The catalysed reaction is tRNA(Thr) + L-threonine + ATP = L-threonyl-tRNA(Thr) + AMP + diphosphate + H(+). Its function is as follows. Catalyzes the attachment of threonine to tRNA(Thr) in a two-step reaction: L-threonine is first activated by ATP to form Thr-AMP and then transferred to the acceptor end of tRNA(Thr). Also edits incorrectly charged L-seryl-tRNA(Thr). The sequence is that of Threonine--tRNA ligase from Francisella tularensis subsp. holarctica (strain OSU18).